Here is a 447-residue protein sequence, read N- to C-terminus: MIKIYDTMTRSLRKFVPLTENTVNMYVCGPTVYNYIHIGNARSAVAFDTIRRYFEYTGYQVNYISNFTDVDDKIIKAATQAGVSPKELSDRFIAAFIEDTKALGVKPATQNPRVMDYIAEIISFVESLIEKDFAYEADGDVYFRVEKSEHYAKLANKTLSELEVGASGRTDAETALKENPLDFALWKSAKAGEVSWDSPWGFGRPGWHIECSVMATEILGDTIDIHGGGADLEFPHHTNEIAQSEAKTGKTFANYWMHNGFVTVDNEKMSKSLGNFVTVHDMLQTVDGQVLRFFLATQQYRKPINFTEKAIHDAEINLKYLKNTLQQPLTETADEQELKQFVIAFQDAMDDDFNTANGITVVFDMAKWINSGSYTEPVKSAFEKMLAVFGIIFEEEVLEVDIEALIAKRQEARANRDFAIADAIRDQLAAQGIKLLDTKDGVRWLRD.

C28 is a binding site for Zn(2+). Residues 30–40 (PTVYNYIHIGN) carry the 'HIGH' region motif. Zn(2+) contacts are provided by C211, H236, and E240. The short motif at 268–272 (KMSKS) is the 'KMSKS' region element. Residue K271 participates in ATP binding.

The protein belongs to the class-I aminoacyl-tRNA synthetase family. In terms of assembly, monomer. Requires Zn(2+) as cofactor.

It is found in the cytoplasm. It carries out the reaction tRNA(Cys) + L-cysteine + ATP = L-cysteinyl-tRNA(Cys) + AMP + diphosphate. This Streptococcus pyogenes serotype M28 (strain MGAS6180) protein is Cysteine--tRNA ligase.